Consider the following 601-residue polypeptide: Glutathione-regulated potassium-efflux system protein KefB (601 aa).

13 helical membrane-spanning segments follow: residues S4–A24, I29–F49, E55–L75, I87–M107, A115–M135, V152–G172, H177–G197, F207–G227, L230–L250, G268–Y288, L291–L311, M324–A344, and A356–V376. One can recognise an RCK N-terminal domain in the interval K400–T519.

The protein belongs to the monovalent cation:proton antiporter 2 (CPA2) transporter (TC 2.A.37) family. KefB subfamily. As to quaternary structure, interacts with the regulatory subunit KefG.

The protein localises to the cell inner membrane. In terms of biological role, pore-forming subunit of a potassium efflux system that confers protection against electrophiles. Catalyzes K(+)/H(+) antiport. The polypeptide is Glutathione-regulated potassium-efflux system protein KefB (Escherichia coli O1:K1 / APEC).